A 149-amino-acid polypeptide reads, in one-letter code: Protein SprT-like (149 aa).

Positions Thr-4–Leu-143 constitute a SprT-like domain. His-64 is a binding site for Zn(2+). Residue Glu-65 is part of the active site. His-68 contacts Zn(2+).

It belongs to the SprT family. Requires Zn(2+) as cofactor.

It is found in the cytoplasm. The protein is Protein SprT-like of Streptococcus pneumoniae (strain Taiwan19F-14).